We begin with the raw amino-acid sequence, 300 residues long: Eukaryotic translation initiation factor 3 subunit F (300 aa).

An MPN domain is found at 33 to 169 (VKVHPVALFS…VQCYVSALLG (137 aa)).

The protein belongs to the eIF-3 subunit F family. In terms of assembly, component of the eukaryotic translation initiation factor 3 (eIF-3) complex.

The protein resides in the cytoplasm. Functionally, component of the eukaryotic translation initiation factor 3 (eIF-3) complex, which is involved in protein synthesis of a specialized repertoire of mRNAs and, together with other initiation factors, stimulates binding of mRNA and methionyl-tRNAi to the 40S ribosome. The eIF-3 complex specifically targets and initiates translation of a subset of mRNAs involved in cell proliferation. This chain is Eukaryotic translation initiation factor 3 subunit F, found in Malassezia globosa (strain ATCC MYA-4612 / CBS 7966) (Dandruff-associated fungus).